The chain runs to 140 residues: Large ribosomal subunit protein uL11 (140 aa).

The protein belongs to the universal ribosomal protein uL11 family. Part of the ribosomal stalk of the 50S ribosomal subunit. Interacts with L10 and the large rRNA to form the base of the stalk. L10 forms an elongated spine to which L12 dimers bind in a sequential fashion forming a multimeric L10(L12)X complex. One or more lysine residues are methylated.

Its function is as follows. Forms part of the ribosomal stalk which helps the ribosome interact with GTP-bound translation factors. The chain is Large ribosomal subunit protein uL11 from Nitratidesulfovibrio vulgaris (strain DSM 19637 / Miyazaki F) (Desulfovibrio vulgaris).